The primary structure comprises 1055 residues: TNF receptor-associated factor homolog 1a (1055 aa).

Residues 1–56 (MSESTNEDSGAGRSSLEENSNGQRSQSEEAIAEWRSSEQVENGTPSTSPPYWDIDD) are disordered. Over residues 37–46 (SEQVENGTPS) the composition is skewed to polar residues. The MATH domain maps to 68–191 (FGKNTWTIEK…SGCLTIKAQV (124 aa)). Disordered regions lie at residues 352 to 380 (PKKE…VERD), 431 to 590 (AESE…NGSY), 603 to 772 (FSNG…APII), and 820 to 845 (VGSS…SHPS). Over residues 433 to 446 (SEQKGKRGASEKEK) the composition is skewed to basic and acidic residues. Positions 441–496 (ASEKEKKSKKKQAKQKKNKNKGKEMRKEDKVRTQTEEREIEKEECVRAIAESSAEK) form a coiled coil. Positions 447-460 (KSKKKQAKQKKNKN) are enriched in basic residues. Residues 461-486 (KGKEMRKEDKVRTQTEEREIEKEECV) are compositionally biased toward basic and acidic residues. Residues 502 to 513 (DVSDVSDSVDSS) show a composition bias toward low complexity. A compositionally biased stretch (basic and acidic residues) spans 524–537 (RESSPVHWEMDASE). A compositionally biased stretch (polar residues) spans 569–586 (MDDSSSTCSNDSIQSGVA). Positions 657 to 668 (QKPESPKERSPV) are enriched in basic and acidic residues. Polar residues-rich tracts occupy residues 723–740 (KSPS…QLQT) and 823–845 (SGFT…SHPS).

In terms of assembly, interacts with AHK3. Interacts with ATG6, SINAT1, SINAT2, SINAT5 and SINAT6.

It localises to the cytoplasm. Its function is as follows. Functions redundantly with TRAF1B in the regulation of plant immune response. Contributes to the turnover of the nucleotide-binding domain and leucine-rich repeat-containing (NB-LRR) immune receptors SNC1 and RPS2. May associate with an E3 ubiquitin-protein ligase complex, which modulates ubiquitination and subsequent degradation of NB-LRR immune sensors to maintain their homeostasis. Functions redundantly with TRAF1B in the regulation of autophagosome formation. Required for SINAT1- and SINAT2-mediated ubiquitination and destabilization of ATG6. Functions as a molecular adapter that helps to regulate autophagy by modulating ATG6 stability. The chain is TNF receptor-associated factor homolog 1a from Arabidopsis thaliana (Mouse-ear cress).